A 615-amino-acid polypeptide reads, in one-letter code: Putative binding protein BruAb2_0648 (615 aa).

The N-terminal stretch at 1–29 (MLNRFIAFFRSVFLIGLVATAFGALPARA) is a signal peptide.

It belongs to the bacterial solute-binding protein 5 family.

The protein resides in the periplasm. In Brucella abortus biovar 1 (strain 9-941), this protein is Putative binding protein BruAb2_0648.